The primary structure comprises 212 residues: Adenylate kinase (212 aa).

ATP is bound at residue 10 to 15 (GAGKGT). The NMP stretch occupies residues 30–59 (STGDMFRAAMANQTEMGTLAKSFIDKGELV). AMP is bound by residues threonine 31, arginine 36, 57–59 (ELV), 86–89 (GYPR), and glutamine 93. The tract at residues 127–159 (GRIINRKTGETYHKVFNPPADYNEDDYYQREDD) is LID. ATP contacts are provided by residues arginine 128 and 137–138 (TY). The AMP site is built by arginine 156 and arginine 167. Glutamine 195 is an ATP binding site.

This sequence belongs to the adenylate kinase family. In terms of assembly, monomer.

The protein localises to the cytoplasm. It carries out the reaction AMP + ATP = 2 ADP. Its pathway is purine metabolism; AMP biosynthesis via salvage pathway; AMP from ADP: step 1/1. Functionally, catalyzes the reversible transfer of the terminal phosphate group between ATP and AMP. Plays an important role in cellular energy homeostasis and in adenine nucleotide metabolism. This is Adenylate kinase from Streptococcus mutans serotype c (strain ATCC 700610 / UA159).